The following is a 361-amino-acid chain: Beta-hexosaminidase (361 aa).

Residues D69, R77, R144, and K174–H175 each bind substrate. H187 (proton donor/acceptor) is an active-site residue. Catalysis depends on D258, which acts as the Nucleophile.

Belongs to the glycosyl hydrolase 3 family. NagZ subfamily.

The protein localises to the cytoplasm. The enzyme catalyses Hydrolysis of terminal non-reducing N-acetyl-D-hexosamine residues in N-acetyl-beta-D-hexosaminides.. It functions in the pathway cell wall biogenesis; peptidoglycan recycling. Functionally, plays a role in peptidoglycan recycling by cleaving the terminal beta-1,4-linked N-acetylglucosamine (GlcNAc) from peptide-linked peptidoglycan fragments, giving rise to free GlcNAc, anhydro-N-acetylmuramic acid and anhydro-N-acetylmuramic acid-linked peptides. In Neisseria meningitidis serogroup C / serotype 2a (strain ATCC 700532 / DSM 15464 / FAM18), this protein is Beta-hexosaminidase.